The primary structure comprises 299 residues: Nitrogenase iron protein (299 aa).

ATP is bound at residue 11 to 18 (GKGGIGKS). Cys-99 contributes to the [4Fe-4S] cluster binding site. Position 102 is an ADP-ribosylarginine; by dinitrogenase reductase ADP-ribosyltransferase (Arg-102). Residue Cys-133 coordinates [4Fe-4S] cluster.

The protein belongs to the NifH/BchL/ChlL family. Homodimer. The cofactor is [4Fe-4S] cluster. Post-translationally, the reversible ADP-ribosylation of Arg-102 inactivates the nitrogenase reductase and regulates nitrogenase activity.

The enzyme catalyses N2 + 8 reduced [2Fe-2S]-[ferredoxin] + 16 ATP + 16 H2O = H2 + 8 oxidized [2Fe-2S]-[ferredoxin] + 2 NH4(+) + 16 ADP + 16 phosphate + 6 H(+). In terms of biological role, the key enzymatic reactions in nitrogen fixation are catalyzed by the nitrogenase complex, which has 2 components: the iron protein and the molybdenum-iron protein. In Rhodopseudomonas palustris (strain BisB5), this protein is Nitrogenase iron protein.